Consider the following 503-residue polypeptide: Cobyric acid synthase (503 aa).

In terms of domain architecture, GATase cobBQ-type spans 255–444 (AIDVAVIRCP…MHDLFHNDAF (190 aa)). C337 (nucleophile) is an active-site residue. H436 is an active-site residue.

This sequence belongs to the CobB/CobQ family. CobQ subfamily.

Its pathway is cofactor biosynthesis; adenosylcobalamin biosynthesis. Its function is as follows. Catalyzes amidations at positions B, D, E, and G on adenosylcobyrinic A,C-diamide. NH(2) groups are provided by glutamine, and one molecule of ATP is hydrogenolyzed for each amidation. This is Cobyric acid synthase from Geobacillus kaustophilus (strain HTA426).